A 355-amino-acid chain; its full sequence is Protein RecA (355 aa).

65-72 contributes to the ATP binding site; the sequence is GPESSGKT.

The protein belongs to the RecA family.

It is found in the cytoplasm. Its function is as follows. Can catalyze the hydrolysis of ATP in the presence of single-stranded DNA, the ATP-dependent uptake of single-stranded DNA by duplex DNA, and the ATP-dependent hybridization of homologous single-stranded DNAs. It interacts with LexA causing its activation and leading to its autocatalytic cleavage. This Pseudomonas putida (strain GB-1) protein is Protein RecA.